A 267-amino-acid chain; its full sequence is Thiamine pyrophosphokinase 2 (267 aa).

It belongs to the thiamine pyrophosphokinase family. Expressed in leaves and at lower levels in flowers.

The protein resides in the cytoplasm. It is found in the cytosol. The enzyme catalyses thiamine + ATP = thiamine diphosphate + AMP + H(+). It participates in cofactor biosynthesis; thiamine diphosphate biosynthesis; thiamine diphosphate from thiamine: step 1/1. In terms of biological role, catalyzes the phosphorylation of thiamine to thiamine pyrophosphate (TPP). TPP is an active cofactor for enzymes involved in glycolysis and energy production. Plant leaves require high levels of TPP for photosynthesis and carbohydrate metabolism. This Arabidopsis thaliana (Mouse-ear cress) protein is Thiamine pyrophosphokinase 2.